An 857-amino-acid chain; its full sequence is Facilitated trehalose transporter Tret1-1 (857 aa).

Disordered regions lie at residues 1–28 (MSGRDSRGAGGGGGGHQPLSNAMGKLKE) and 62–203 (DPFL…KATS). Residues 1-392 (MSGRDSRGAG…VYRPTTNPIY (392 aa)) are Cytoplasmic-facing. Polar residues predominate over residues 69-81 (VSPQRHPQNTVRT). Residues 134–143 (EIREHRDRQQ) are compositionally biased toward basic and acidic residues. A compositionally biased stretch (polar residues) spans 171-181 (GNSNTNSNKAA). A phosphoserine mark is found at S248, S249, S250, S320, and S322. Positions 327 to 346 (LTSRQHFQQQRSISTDSRKS) are disordered. The segment covering 330–341 (RQHFQQQRSIST) has biased composition (polar residues). The chain crosses the membrane as a helical span at residues 393–413 (IWTQVLAALSVSLGSLVVGFV). Over 414–440 (SAYTSPALVSMTDRNITSFEVTQDAGS) the chain is Extracellular. The N-linked (GlcNAc...) asparagine glycan is linked to N428. A helical membrane pass occupies residues 441 to 461 (WVGGIMPLAGLAGGIAGGPLI). Topologically, residues 462 to 473 (EYLGRRNTILAT) are cytoplasmic. A helical transmembrane segment spans residues 474–494 (AVPFIVSSLLIACAVNVAMVL). Topologically, residues 495 to 497 (CGR) are extracellular. The chain crosses the membrane as a helical span at residues 498–518 (FLAGFCVGIASLSLPVYLGET). Residues 519–528 (VQPEVRGTLG) are Cytoplasmic-facing. The helical transmembrane segment at 529 to 549 (LLPTAFGNIGILLCFVAGSFM) threads the bilayer. A glycan (N-linked (GlcNAc...) asparagine) is linked at N550. Residues 550–552 (NWS) are Extracellular-facing. Residues 553-573 (MLAFLGAALPVPFLILMFLIP) traverse the membrane as a helical segment. The Cytoplasmic portion of the chain corresponds to 574-636 (ETPRWFVGRG…ELFKRINLKP (63 aa)). A helical membrane pass occupies residues 637–657 (LSISLGLMFFQQFSGINAVIF). The Extracellular segment spans residues 658-673 (YTVQIFKDAGSTIDSN). Residues 674 to 694 (LCTIIVGIVNFFATFMGILLI) traverse the membrane as a helical segment. The Cytoplasmic portion of the chain corresponds to 695-700 (DRLGRK). The helical transmembrane segment at 701 to 721 (ILLYISDIAMILTLSILGGFF) threads the bilayer. Residues 722 to 740 (YCKAHGPDVSHLGWLPLTC) are Extracellular-facing. Residues 741 to 761 (FVIYILGFSLGFGPIPWLMMG) form a helical membrane-spanning segment. Over 762 to 770 (EILPAKIRG) the chain is Cytoplasmic. The chain crosses the membrane as a helical span at residues 771 to 791 (PAASVVTAFNWFCTFVVTKTF). The Extracellular portion of the chain corresponds to 792–801 (QDLTGAMGAH). Residues 802 to 822 (GAFWLFGAICFVGLFFVIIYV) traverse the membrane as a helical segment. Residues 823-857 (PETQGKTLEDIERKMMGRVRRMSSVANIKPLSFNM) lie on the Cytoplasmic side of the membrane. Phosphoserine is present on residues S845 and S846.

It belongs to the major facilitator superfamily. Sugar transporter (TC 2.A.1.1) family. Trehalose transporter subfamily.

The protein resides in the cell membrane. Its function is as follows. Low-capacity facilitative transporter for trehalose. Does not transport maltose, sucrose or lactose. Mediates the bidirectional transfer of trehalose. Responsible for the transport of trehalose synthesized in the fat body and the incorporation of trehalose into other tissues that require a carbon source, thereby regulating trehalose levels in the hemolymph. The protein is Facilitated trehalose transporter Tret1-1 of Drosophila simulans (Fruit fly).